A 98-amino-acid polypeptide reads, in one-letter code: Integration host factor subunit beta (98 aa).

It belongs to the bacterial histone-like protein family. In terms of assembly, heterodimer of an alpha and a beta chain.

Functionally, this protein is one of the two subunits of integration host factor, a specific DNA-binding protein that functions in genetic recombination as well as in transcriptional and translational control. The protein is Integration host factor subunit beta of Pseudomonas entomophila (strain L48).